Consider the following 152-residue polypeptide: Probable ribose-5-phosphate isomerase B (152 aa).

10 to 11 (DH) contributes to the D-ribulose 5-phosphate binding site. The active-site Proton acceptor is cysteine 69. Residue 70–74 (GTGVG) participates in D-ribulose 5-phosphate binding. The Proton donor role is filled by histidine 102. Residues aspartate 103, arginine 113, arginine 136, and arginine 140 each contribute to the D-ribulose 5-phosphate site.

Belongs to the LacAB/RpiB family. Homodimer.

It catalyses the reaction aldehydo-D-ribose 5-phosphate = D-ribulose 5-phosphate. It participates in carbohydrate degradation; pentose phosphate pathway; D-ribose 5-phosphate from D-ribulose 5-phosphate (non-oxidative stage): step 1/1. In terms of biological role, catalyzes the interconversion of ribulose-5-P and ribose-5-P. The chain is Probable ribose-5-phosphate isomerase B from Mycoplasma genitalium (strain ATCC 33530 / DSM 19775 / NCTC 10195 / G37) (Mycoplasmoides genitalium).